Consider the following 388-residue polypeptide: Succinate--CoA ligase [ADP-forming] subunit beta (388 aa).

The ATP-grasp domain maps to 9–245; it reads KELLASYGLP…KSQENERELK (237 aa). Residues Lys46, 53-55, Glu100, Tyr103, and Glu108 each bind ATP; that span reads GRG. Residues Asn200 and Asp214 each contribute to the Mg(2+) site. Substrate-binding positions include Asn265 and 322–324; that span reads GIV.

Belongs to the succinate/malate CoA ligase beta subunit family. Heterotetramer of two alpha and two beta subunits. The cofactor is Mg(2+).

The enzyme catalyses succinate + ATP + CoA = succinyl-CoA + ADP + phosphate. It carries out the reaction GTP + succinate + CoA = succinyl-CoA + GDP + phosphate. Its pathway is carbohydrate metabolism; tricarboxylic acid cycle; succinate from succinyl-CoA (ligase route): step 1/1. In terms of biological role, succinyl-CoA synthetase functions in the citric acid cycle (TCA), coupling the hydrolysis of succinyl-CoA to the synthesis of either ATP or GTP and thus represents the only step of substrate-level phosphorylation in the TCA. The beta subunit provides nucleotide specificity of the enzyme and binds the substrate succinate, while the binding sites for coenzyme A and phosphate are found in the alpha subunit. The polypeptide is Succinate--CoA ligase [ADP-forming] subunit beta (Neisseria meningitidis serogroup B (strain ATCC BAA-335 / MC58)).